The following is a 272-amino-acid chain: Acyl-[acyl-carrier-protein]--UDP-N-acetylglucosamine O-acyltransferase (272 aa).

This sequence belongs to the transferase hexapeptide repeat family. LpxA subfamily. As to quaternary structure, homotrimer.

Its subcellular location is the cytoplasm. The catalysed reaction is a (3R)-hydroxyacyl-[ACP] + UDP-N-acetyl-alpha-D-glucosamine = a UDP-3-O-[(3R)-3-hydroxyacyl]-N-acetyl-alpha-D-glucosamine + holo-[ACP]. The protein operates within glycolipid biosynthesis; lipid IV(A) biosynthesis; lipid IV(A) from (3R)-3-hydroxytetradecanoyl-[acyl-carrier-protein] and UDP-N-acetyl-alpha-D-glucosamine: step 1/6. Involved in the biosynthesis of lipid A, a phosphorylated glycolipid that anchors the lipopolysaccharide to the outer membrane of the cell. This is Acyl-[acyl-carrier-protein]--UDP-N-acetylglucosamine O-acyltransferase from Rhizobium etli (strain ATCC 51251 / DSM 11541 / JCM 21823 / NBRC 15573 / CFN 42).